Reading from the N-terminus, the 230-residue chain is Claudin-2 (230 aa).

Over 1-7 the chain is Cytoplasmic; it reads MASLGLQ. Residues 8 to 28 traverse the membrane as a helical segment; the sequence is LVGYVLGLLGLLGTVIAMLLP. The Extracellular segment spans residues 29-81; that stretch reads SWRTSSYVGASIVTAVGFSKGLWMECATHSTGITQCDIYSTMLGLPADIQAAQ. A disulfide bridge connects residues Cys-54 and Cys-64. The chain crosses the membrane as a helical span at residues 82 to 102; that stretch reads AMMVTSSAMSSLACIVSVVGM. Residues 103–116 lie on the Cytoplasmic side of the membrane; sequence RCTVFFQESRAKDR. The helical transmembrane segment at 117 to 137 threads the bilayer; it reads VAVVGGVFFILGGLLGFIPVA. Residues 138–162 are Extracellular-facing; it reads WNLHGILRDFYSPLVPDSMKFEIGE. The chain crosses the membrane as a helical span at residues 163-183; sequence ALYLGIISSLFSLIAGIFLCF. Residues 184–230 lie on the Cytoplasmic side of the membrane; it reads SCSPQGNRSNYYDAYQAQPLATRSSPRPGQAPKGKSEFNSYSLTGYV. Positions 205-230 are disordered; it reads TRSSPRPGQAPKGKSEFNSYSLTGYV. Lys-218 is covalently cross-linked (Glycyl lysine isopeptide (Lys-Gly) (interchain with G-Cter in SUMO)). 2 positions are modified to phosphoserine: Ser-219 and Ser-223. Residues 220–230 are compositionally biased toward polar residues; the sequence is EFNSYSLTGYV. The interaction with TJP1, TJP2 and TJP3 stretch occupies residues 229-230; that stretch reads YV.

It belongs to the claudin family. Can form homo- and heteropolymers with other claudins to mediate paracellular barrier and channel functions of tight junctions in response to physiological stimuli. Homopolymers interact with CLDN3, but not CLDN1, homopolymers. Directly interacts with TJP1/ZO-1, TJP2/ZO-2 and TJP3/ZO-3. Post-translationally, the disulfide bond is necessary for pore formation, but is not required for correct protein trafficking.

It localises to the cell junction. The protein resides in the tight junction. The protein localises to the cell membrane. It catalyses the reaction Na(+)(in) = Na(+)(out). The catalysed reaction is K(+)(in) = K(+)(out). It carries out the reaction Rb(+)(in) = Rb(+)(out). The enzyme catalyses Li(+)(in) = Li(+)(out). It catalyses the reaction Cs(+)(in) = Cs(+)(out). The catalysed reaction is Ca(2+)(in) = Ca(2+)(out). It carries out the reaction methylamine(out) = methylamine(in). The enzyme catalyses choline(out) = choline(in). It catalyses the reaction H2O(in) = H2O(out). Its function is as follows. Forms paracellular channels: polymerizes in tight junction strands with cation- and water-selective channels through the strands, conveying epithelial permeability in a process known as paracellular tight junction permeability. In intestinal epithelium, allows for sodium and water fluxes from the peritoneal side to the lumen of the intestine to regulate nutrient absorption and clear enteric pathogens as part of mucosal immune response. In kidney, allows passive sodium and calcium reabsorption across proximal tubules from the lumen back to the bloodstream. In the hepatobiliary tract, allows paracellular water and cation fluxes in the hepatic perivenous areas and biliary epithelium to generate bile flow and maintain osmotic gradients. The protein is Claudin-2 (CLDN2) of Bos taurus (Bovine).